The sequence spans 517 residues: Nuclear receptor subfamily 5 group A member 2 (517 aa).

The nuclear receptor DNA-binding region spans aspartate 43–alanine 118. Zn(2+) is bound by residues cysteine 46, cysteine 49, cysteine 63, cysteine 66, cysteine 82, cysteine 88, cysteine 98, and cysteine 101. NR C4-type zinc fingers lie at residues cysteine 46–cysteine 66 and cysteine 82–cysteine 101. The tract at residues lysine 112–lysine 127 is C-terminal extension (CTE). Residues phenylalanine 128 to arginine 147 carry the FTZ-F1 box motif. Residues glycine 182–aspartate 211 form a disordered region. A compositionally biased stretch (basic residues) spans serine 186–serine 199. The region spanning serine 276–lysine 515 is the NR LBD domain. Residues glycine 397 to leucine 400, tyrosine 492, and lysine 496 contribute to the a phospholipid derivative site. The AF-2 stretch occupies residues cysteine 504–lysine 515.

This sequence belongs to the nuclear hormone receptor family. NR5 subfamily. As to quaternary structure, monomer; Binds DNA as a monomer.

The protein resides in the nucleus. It is found in the chromosome. Functionally, orphan nuclear receptor that binds DNA as a monomer to the 5'-TCAAGGCCA-3' sequence and controls expression of target genes: regulates key biological processes, such as cholesterol and bile acid synthesis pathways, as well as cartilage, liver and pancreas morphogenesis. Ligand-binding causes conformational change which causes recruitment of coactivators, promoting target gene activation. The specific ligand is unknown, but specific phospholipids, such as phosphatidylethanolamine, phosphatidylserine, dilauroyl phosphatidylcholine and diundecanoyl phosphatidylcholine can act as ligand in vitro. Acts as a pioneer transcription factor, which unwraps target DNA from histones and elicits local opening of closed chromatin. Involved in the formation of connective tissue in lower jaw. Lacks transcription factor activity; unable to activate expression of target genes. This chain is Nuclear receptor subfamily 5 group A member 2, found in Danio rerio (Zebrafish).